A 146-amino-acid polypeptide reads, in one-letter code: 3-dehydroquinate dehydratase (146 aa).

Tyrosine 23 functions as the Proton acceptor in the catalytic mechanism. Residues asparagine 74, histidine 80, and aspartate 87 each contribute to the substrate site. Histidine 100 acts as the Proton donor in catalysis. Substrate contacts are provided by residues 101–102 (IS) and arginine 111.

It belongs to the type-II 3-dehydroquinase family. As to quaternary structure, homododecamer.

The enzyme catalyses 3-dehydroquinate = 3-dehydroshikimate + H2O. It functions in the pathway metabolic intermediate biosynthesis; chorismate biosynthesis; chorismate from D-erythrose 4-phosphate and phosphoenolpyruvate: step 3/7. Its function is as follows. Catalyzes a trans-dehydration via an enolate intermediate. This is 3-dehydroquinate dehydratase from Bacillus mycoides (strain KBAB4) (Bacillus weihenstephanensis).